The sequence spans 584 residues: Membrane protein insertase YidC (584 aa).

5 consecutive transmembrane segments (helical) span residues 5–25, 358–378, 428–448, 478–498, and 516–536; these read SVIGLVLISLIMIVWMQFMAP, FIGNYGLIIIIFAFLIKLVTY, LGGCLPVVLQMPLLFAMFYVF, IPLYGDHIALFPILMAVAVFL, and IYIFPVMMLLFFNNMPAGLGL. Positions 563-584 are disordered; it reads ALSPVVAAPPKAPKKKKNARKR. Residues 574 to 584 show a composition bias toward basic residues; sequence APKKKKNARKR.

This sequence belongs to the OXA1/ALB3/YidC family. Type 1 subfamily. In terms of assembly, interacts with the Sec translocase complex via SecD. Specifically interacts with transmembrane segments of nascent integral membrane proteins during membrane integration.

The protein localises to the cell inner membrane. Functionally, required for the insertion and/or proper folding and/or complex formation of integral membrane proteins into the membrane. Involved in integration of membrane proteins that insert both dependently and independently of the Sec translocase complex, as well as at least some lipoproteins. Aids folding of multispanning membrane proteins. The polypeptide is Membrane protein insertase YidC (Prosthecochloris aestuarii (strain DSM 271 / SK 413)).